A 232-amino-acid chain; its full sequence is Ribosomal RNA small subunit methyltransferase G (232 aa).

Residues 1 to 24 (MVDTALHPIPGRRTPPHPRSTLPL) form a disordered region. S-adenosyl-L-methionine contacts are provided by residues Gly-91, Leu-96, 142–143 (AE), and Arg-160.

Belongs to the methyltransferase superfamily. RNA methyltransferase RsmG family.

The protein resides in the cytoplasm. In terms of biological role, specifically methylates the N7 position of guanine in position 518 of 16S rRNA. The protein is Ribosomal RNA small subunit methyltransferase G of Corynebacterium efficiens (strain DSM 44549 / YS-314 / AJ 12310 / JCM 11189 / NBRC 100395).